Here is a 230-residue protein sequence, read N- to C-terminus: Large ribosomal subunit protein uL1 (230 aa).

The protein belongs to the universal ribosomal protein uL1 family. Part of the 50S ribosomal subunit.

Functionally, binds directly to 23S rRNA. The L1 stalk is quite mobile in the ribosome, and is involved in E site tRNA release. Its function is as follows. Protein L1 is also a translational repressor protein, it controls the translation of the L11 operon by binding to its mRNA. This chain is Large ribosomal subunit protein uL1, found in Thermoanaerobacter sp. (strain X514).